A 111-amino-acid polypeptide reads, in one-letter code: Putative single-stranded DNA-binding protein ycf41 (111 aa).

The 98-residue stretch at 1-98 folds into the SSB domain; that stretch reads MNKCNLLVQI…FSTSRIFKYK (98 aa).

The protein localises to the plastid. It localises to the chloroplast. The polypeptide is Putative single-stranded DNA-binding protein ycf41 (ycf41) (Porphyra purpurea (Red seaweed)).